We begin with the raw amino-acid sequence, 520 residues long: GMP synthase [glutamine-hydrolyzing] (520 aa).

The Glutamine amidotransferase type-1 domain maps to 9-202 (TVLIVDFGSQ…VHKIAGIKGD (194 aa)). Residue Cys-86 is the Nucleophile of the active site. Residues His-176 and Glu-178 contribute to the active site. Residues 203-395 (WTMSAYRAKA…LGLPESFIGR (193 aa)) form the GMPS ATP-PPase domain. 230-236 (SGGVDSS) is an ATP binding site.

As to quaternary structure, homodimer.

The enzyme catalyses XMP + L-glutamine + ATP + H2O = GMP + L-glutamate + AMP + diphosphate + 2 H(+). Its pathway is purine metabolism; GMP biosynthesis; GMP from XMP (L-Gln route): step 1/1. Functionally, catalyzes the synthesis of GMP from XMP. The sequence is that of GMP synthase [glutamine-hydrolyzing] from Sinorhizobium fredii (strain NBRC 101917 / NGR234).